The chain runs to 1915 residues: Protein NLRC5 (1915 aa).

Positions 103–137 (LGAGEESCPGPQLYHGAKRPFQSYGSSPRRKNSKK) are disordered. In terms of domain architecture, NACHT spans 223–542 (RVTVLLGKAG…HTVDKDTLVE (320 aa)). 229–236 (GKAGMGKT) contacts ATP. LRR repeat units follow at residues 622-646 (VAET…SFHN), 716-740 (MGSL…LIQT), 744-771 (CSQL…LLPS), 772-796 (LPKL…LVKV), 871-898 (SPQL…AASQ), 900-923 (HIAQ…VLKA), 930-953 (LEDL…PREQ), 1006-1033 (THNL…LLPG), 1034-1055 (LGPL…VFSL), 1138-1161 (EVQL…LPQL), 1162-1184 (PQLS…LLAD), 1240-1263 (CNAL…CLLE), 1265-1292 (LPQL…LLET), 1348-1371 (AQQL…MLLN), 1481-1504 (SKLL…FSQV), 1519-1542 (CHHL…LLMG), 1552-1575 (KLHL…LSRM), 1576-1598 (TLLQ…CLAA), 1603-1626 (LPEL…CLAA), 1631-1654 (LPEL…CLAA), 1659-1682 (LPEL…CLAA), 1687-1711 (LPEL…LVKS), 1715-1738 (FEHL…ELAQ), 1741-1768 (PPQL…ALEQ), 1769-1795 (CPHI…RLPL), 1821-1845 (FPAL…LAQV), and 1849-1872 (MGQL…LLAQ).

This sequence belongs to the NLRP family. As to quaternary structure, interacts with CHUK and IKBKB; prevents CHUK and IKBKB phosphorylation and inhibits their kinase activity. Interacts with RIGI and IFIH1; blocks the interaction of MAVS to RIGI. Expressed in spleen, thymus and lung.

The protein resides in the cytoplasm. Functionally, probable regulator of the NF-kappa-B and type I interferon signaling pathways. May also regulate the type II interferon signaling pathway. Plays a role in homeostatic control of innate immunity and in antiviral defense mechanisms. In Mus musculus (Mouse), this protein is Protein NLRC5 (Nlrc5).